A 384-amino-acid polypeptide reads, in one-letter code: Odorant receptor 33c (384 aa).

The Cytoplasmic segment spans residues 1-35; the sequence is MVIIDSLSFYRPFWICMRLLVPTFFKDSSRPVQLY. Residues 36 to 56 form a helical membrane-spanning segment; the sequence is VVLLHILVTLWFPLHLLLHLL. Residues 57-63 lie on the Extracellular side of the membrane; that stretch reads LLPSTAE. The helical transmembrane segment at 64–84 threads the bilayer; the sequence is FFKNLTMSLTCVACSLKHVAH. At 85–128 the chain is on the cytoplasmic side; sequence LYHLPQIVEIESLIEQLDTFIASEQEHRYYRDHVHCHARRFTRC. A helical transmembrane segment spans residues 129–149; sequence LYISFGMIYALFLFGVFVQVI. Topologically, residues 150 to 169 are extracellular; sequence SGNWELLYPAYFPFDLESNR. A helical membrane pass occupies residues 170-190; that stretch reads FLGAVALGYQVFSMLVEGFQG. Residues 191–251 lie on the Cytoplasmic side of the membrane; that stretch reads LGNDTYTPLT…LVRFHNLVSR (61 aa). A helical transmembrane segment spans residues 252-272; it reads TISEVQLVQLGGCGATLCIIV. Topologically, residues 273 to 274 are extracellular; the sequence is SY. A helical transmembrane segment spans residues 275–295; that stretch reads MLFFVGDTISLVYYLVFFGVV. The Cytoplasmic portion of the chain corresponds to 296–358; that stretch reads CVQLFPSCYF…WIIKAGGLIE (63 aa). The chain crosses the membrane as a helical span at residues 359–379; sequence LNLNAFFATLKMAYSLFAVVV. At 380–384 the chain is on the extracellular side; the sequence is RAKGI.

This sequence belongs to the insect chemoreceptor superfamily. Heteromeric odorant receptor channel (TC 1.A.69) family. Or2a subfamily. In terms of assembly, interacts with Orco. Complexes exist early in the endomembrane system in olfactory sensory neurons (OSNs), coupling these complexes to the conserved ciliary trafficking pathway. Expressed in the antenna and in a subset of 18 olfactory receptor neurons in the maxillary palp.

It localises to the cell membrane. Its function is as follows. Odorant receptor which mediates acceptance or avoidance behavior, depending on its substrates. The odorant receptor repertoire encodes a large collection of odor stimuli that vary widely in identity, intensity, and duration. May form a complex with Orco to form odorant-sensing units, providing sensitive and prolonged odorant signaling and calcium permeability. This chain is Odorant receptor 33c (Or33c), found in Drosophila melanogaster (Fruit fly).